The following is a 1155-amino-acid chain: DNA-directed RNA polymerase subunit beta (1155 aa).

It belongs to the RNA polymerase beta chain family. As to quaternary structure, the RNAP catalytic core consists of 2 alpha, 1 beta, 1 beta' and 1 omega subunit. When a sigma factor is associated with the core the holoenzyme is formed, which can initiate transcription.

The enzyme catalyses RNA(n) + a ribonucleoside 5'-triphosphate = RNA(n+1) + diphosphate. Functionally, DNA-dependent RNA polymerase catalyzes the transcription of DNA into RNA using the four ribonucleoside triphosphates as substrates. The chain is DNA-directed RNA polymerase subunit beta from Borrelia duttonii (strain Ly).